A 193-amino-acid chain; its full sequence is Ion-translocating oxidoreductase complex subunit A (193 aa).

6 consecutive transmembrane segments (helical) span residues 5 to 25, 39 to 59, 62 to 82, 102 to 122, 134 to 154, and 171 to 191; these read LLLF…FLGL, IGMG…AWMV, FILL…LVIA, LLGI…VALL, AVYG…FAAI, and SIAL…TGLV.

Belongs to the NqrDE/RnfAE family. As to quaternary structure, the complex is composed of six subunits: RnfA, RnfB, RnfC, RnfD, RnfE and RnfG.

The protein localises to the cell inner membrane. Functionally, part of a membrane-bound complex that couples electron transfer with translocation of ions across the membrane. The protein is Ion-translocating oxidoreductase complex subunit A of Yersinia pestis (strain Pestoides F).